The primary structure comprises 36 residues: MSDIN-like toxin proprotein 10 (36 aa).

A propeptide spanning residues 1 to 10 (MSDINATRLP) is cleaved from the precursor. Positions 11 to 19 (GAYPPVPMP) form a cross-link, cyclopeptide (Gly-Pro). Positions 20 to 36 (CVGDADNFTLTRGENLC) are excised as a propeptide.

It belongs to the MSDIN fungal toxin family. Processed by the macrocyclase-peptidase enzyme POPB to yield a toxic cyclic nonapeptide. POPB first removes 10 residues from the N-terminus. Conformational trapping of the remaining peptide forces the enzyme to release this intermediate rather than proceed to macrocyclization. The enzyme rebinds the remaining peptide in a different conformation and catalyzes macrocyclization of the N-terminal 9 residues.

Probable toxin that belongs to the MSDIN-like toxin family responsible for a large number of food poisoning cases and deaths. This is MSDIN-like toxin proprotein 10 from Amanita bisporigera (Destroying angel).